The following is an 89-amino-acid chain: UPF0335 protein OCAR_5086/OCA5_c28780 (89 aa).

This sequence belongs to the UPF0335 family.

This is UPF0335 protein OCAR_5086/OCA5_c28780 from Afipia carboxidovorans (strain ATCC 49405 / DSM 1227 / KCTC 32145 / OM5) (Oligotropha carboxidovorans).